We begin with the raw amino-acid sequence, 121 residues long: MNKTRISRVGEEIKKELSLVLQRGLKDPRVGFVTVTDVEVSSDLQLAKVFVSIFGSEEERKASLAGLTKAKGYLRTEIGKRVKLRHIPDFVFKLDESIDYGSKIESILREISTEGEKQDES.

It belongs to the RbfA family. In terms of assembly, monomer. Binds 30S ribosomal subunits, but not 50S ribosomal subunits or 70S ribosomes.

It localises to the cytoplasm. One of several proteins that assist in the late maturation steps of the functional core of the 30S ribosomal subunit. Associates with free 30S ribosomal subunits (but not with 30S subunits that are part of 70S ribosomes or polysomes). Required for efficient processing of 16S rRNA. May interact with the 5'-terminal helix region of 16S rRNA. This is Ribosome-binding factor A from Brevibacillus brevis (strain 47 / JCM 6285 / NBRC 100599).